We begin with the raw amino-acid sequence, 384 residues long: S-adenosylmethionine synthase (384 aa).

His15 provides a ligand contact to ATP. Mg(2+) is bound at residue Asp17. Glu43 serves as a coordination point for K(+). L-methionine contacts are provided by Glu56 and Gln99. Positions 99–109 are flexible loop; sequence QSPDINQGVDK. ATP-binding positions include 164-166, 230-231, Asp239, 245-246, Ala262, and Lys266; these read DAK, RF, and RK. Asp239 provides a ligand contact to L-methionine. Lys270 serves as a coordination point for L-methionine.

Belongs to the AdoMet synthase family. In terms of assembly, homotetramer; dimer of dimers. The cofactor is Mg(2+). K(+) serves as cofactor.

The protein resides in the cytoplasm. The enzyme catalyses L-methionine + ATP + H2O = S-adenosyl-L-methionine + phosphate + diphosphate. It participates in amino-acid biosynthesis; S-adenosyl-L-methionine biosynthesis; S-adenosyl-L-methionine from L-methionine: step 1/1. Its function is as follows. Catalyzes the formation of S-adenosylmethionine (AdoMet) from methionine and ATP. The overall synthetic reaction is composed of two sequential steps, AdoMet formation and the subsequent tripolyphosphate hydrolysis which occurs prior to release of AdoMet from the enzyme. In Aliivibrio salmonicida (strain LFI1238) (Vibrio salmonicida (strain LFI1238)), this protein is S-adenosylmethionine synthase.